Here is a 160-residue protein sequence, read N- to C-terminus: Putative pre-16S rRNA nuclease (160 aa).

This sequence belongs to the YqgF nuclease family.

The protein localises to the cytoplasm. Its function is as follows. Could be a nuclease involved in processing of the 5'-end of pre-16S rRNA. The sequence is that of Putative pre-16S rRNA nuclease from Cereibacter sphaeroides (strain ATCC 17025 / ATH 2.4.3) (Rhodobacter sphaeroides).